The chain runs to 276 residues: Formamidopyrimidine-DNA glycosylase (276 aa).

Pro-2 functions as the Schiff-base intermediate with DNA in the catalytic mechanism. The active-site Proton donor is the Glu-3. The Proton donor; for beta-elimination activity role is filled by Lys-60. The DNA site is built by His-93 and Arg-112. The FPG-type zinc finger occupies 240-274; the sequence is NVYGKKGEPCVTCGTILEKTVVGGRGTHYCPICQP. Arg-264 functions as the Proton donor; for delta-elimination activity in the catalytic mechanism.

This sequence belongs to the FPG family. Monomer. Requires Zn(2+) as cofactor.

The catalysed reaction is Hydrolysis of DNA containing ring-opened 7-methylguanine residues, releasing 2,6-diamino-4-hydroxy-5-(N-methyl)formamidopyrimidine.. The enzyme catalyses 2'-deoxyribonucleotide-(2'-deoxyribose 5'-phosphate)-2'-deoxyribonucleotide-DNA = a 3'-end 2'-deoxyribonucleotide-(2,3-dehydro-2,3-deoxyribose 5'-phosphate)-DNA + a 5'-end 5'-phospho-2'-deoxyribonucleoside-DNA + H(+). Its function is as follows. Involved in base excision repair of DNA damaged by oxidation or by mutagenic agents. Acts as a DNA glycosylase that recognizes and removes damaged bases. Has a preference for oxidized purines, such as 7,8-dihydro-8-oxoguanine (8-oxoG). Has AP (apurinic/apyrimidinic) lyase activity and introduces nicks in the DNA strand. Cleaves the DNA backbone by beta-delta elimination to generate a single-strand break at the site of the removed base with both 3'- and 5'-phosphates. The protein is Formamidopyrimidine-DNA glycosylase of Bacillus cereus (strain ATCC 14579 / DSM 31 / CCUG 7414 / JCM 2152 / NBRC 15305 / NCIMB 9373 / NCTC 2599 / NRRL B-3711).